The chain runs to 347 residues: Cytoplasmic tRNA 2-thiolation protein 1 (347 aa).

At serine 200 the chain carries Phosphoserine. Residues 315 to 347 (LAIGKGRRGLDEEGPPREPQPSRPLTSEPVPDF) form a disordered region.

The protein belongs to the TtcA family. CTU1/NCS6/ATPBD3 subfamily. As to quaternary structure, component of a complex at least composed of URM1, CTU2/NCS2 and CTU1/ATPBD3. May form a heterodimer with CTU2/NCS2.

It is found in the cytoplasm. The protein operates within tRNA modification; 5-methoxycarbonylmethyl-2-thiouridine-tRNA biosynthesis. In terms of biological role, plays a central role in 2-thiolation of mcm(5)S(2)U at tRNA wobble positions of tRNA(Lys), tRNA(Glu) and tRNA(Gln). Directly binds tRNAs and probably acts by catalyzing adenylation of tRNAs, an intermediate required for 2-thiolation. It is unclear whether it acts as a sulfurtransferase that transfers sulfur from thiocarboxylated URM1 onto the uridine of tRNAs at wobble position. This chain is Cytoplasmic tRNA 2-thiolation protein 1, found in Bos taurus (Bovine).